Here is a 75-residue protein sequence, read N- to C-terminus: Small capsomere-interacting protein (75 aa).

The protein belongs to the herpesviridae small capsomere-interacting protein family. In terms of assembly, interacts with the major capsid protein/MCP.

It is found in the virion. Its subcellular location is the host nucleus. Participates in the assembly of the infectious particles by decorating the outer surface of the capsid shell and thus forming a layer between the capsid and the tegument. Complexes composed of the major capsid protein and small capsomere-interacting protein/SCP assemble together in the host cytoplasm and are translocated to the nucleus, where they accumulate and participate in capsid assembly. The polypeptide is Small capsomere-interacting protein (Homo sapiens (Human)).